Consider the following 201-residue polypeptide: Small ribosomal subunit protein uS4 (201 aa).

Residues 91 to 157 (CRLDNVVYRA…TPFIIAKETI (67 aa)) form the S4 RNA-binding domain.

The protein belongs to the universal ribosomal protein uS4 family. In terms of assembly, part of the 30S ribosomal subunit. Contacts protein S5. The interaction surface between S4 and S5 is involved in control of translational fidelity.

One of the primary rRNA binding proteins, it binds directly to 16S rRNA where it nucleates assembly of the body of the 30S subunit. In terms of biological role, with S5 and S12 plays an important role in translational accuracy. This is Small ribosomal subunit protein uS4 from Saccharopolyspora erythraea (strain ATCC 11635 / DSM 40517 / JCM 4748 / NBRC 13426 / NCIMB 8594 / NRRL 2338).